The sequence spans 213 residues: Protein ras-1 (213 aa).

Residue 15–22 (GGGGVGKS) participates in GTP binding. The short motif at 37–45 (YDPTIEDSY) is the Effector region element. GTP-binding positions include 62-66 (DTAGQ) and 121-124 (NKYD). At cysteine 210 the chain carries Cysteine methyl ester. The S-farnesyl cysteine moiety is linked to residue cysteine 210. A propeptide spans 211–213 (IMM) (removed in mature form).

The protein belongs to the small GTPase superfamily. Ras family.

The protein localises to the cell membrane. It carries out the reaction GTP + H2O = GDP + phosphate + H(+). Functionally, ras proteins bind GDP/GTP and possess intrinsic GTPase activity. The sequence is that of Protein ras-1 (ras-1) from Neurospora crassa (strain ATCC 24698 / 74-OR23-1A / CBS 708.71 / DSM 1257 / FGSC 987).